Reading from the N-terminus, the 403-residue chain is Protein-glutamate methylesterase/protein-glutamine glutaminase (403 aa).

The Response regulatory domain maps to 8-126 (AVLIVDDSAL…SAHLRTVSRK (119 aa)). Aspartate 59 is subject to 4-aspartylphosphate. A CheB-type methylesterase domain is found at 204-393 (PLRESGALQI…VSLDDMAATI (190 aa)). Catalysis depends on residues serine 219, histidine 246, and aspartate 342.

It belongs to the CheB family. In terms of processing, phosphorylated by CheA. Phosphorylation of the N-terminal regulatory domain activates the methylesterase activity.

The protein localises to the cytoplasm. The catalysed reaction is [protein]-L-glutamate 5-O-methyl ester + H2O = L-glutamyl-[protein] + methanol + H(+). It catalyses the reaction L-glutaminyl-[protein] + H2O = L-glutamyl-[protein] + NH4(+). In terms of biological role, involved in chemotaxis. Part of a chemotaxis signal transduction system that modulates chemotaxis in response to various stimuli. Catalyzes the demethylation of specific methylglutamate residues introduced into the chemoreceptors (methyl-accepting chemotaxis proteins or MCP) by CheR. Also mediates the irreversible deamidation of specific glutamine residues to glutamic acid. The sequence is that of Protein-glutamate methylesterase/protein-glutamine glutaminase from Treponema pallidum (strain Nichols).